A 268-amino-acid polypeptide reads, in one-letter code: Hydroxyethylthiazole kinase (268 aa).

Substrate is bound at residue Met47. Arg122 and Thr168 together coordinate ATP. Residue Ala195 coordinates substrate.

It belongs to the Thz kinase family. Requires Mg(2+) as cofactor.

It catalyses the reaction 5-(2-hydroxyethyl)-4-methylthiazole + ATP = 4-methyl-5-(2-phosphooxyethyl)-thiazole + ADP + H(+). It functions in the pathway cofactor biosynthesis; thiamine diphosphate biosynthesis; 4-methyl-5-(2-phosphoethyl)-thiazole from 5-(2-hydroxyethyl)-4-methylthiazole: step 1/1. Its function is as follows. Catalyzes the phosphorylation of the hydroxyl group of 4-methyl-5-beta-hydroxyethylthiazole (THZ). This chain is Hydroxyethylthiazole kinase, found in Rhizobium rhizogenes (strain K84 / ATCC BAA-868) (Agrobacterium radiobacter).